Here is a 392-residue protein sequence, read N- to C-terminus: uncharacterized protein (392 aa).

Helical transmembrane passes span 2–23 (WLAN…SLYI), 38–60 (SGYV…GRFG), 73–95 (GTGI…LFFL), 153–175 (FTYT…LFGV), 195–217 (VLSY…LIQT), 237–259 (VNLA…LLAR), 272–291 (RILI…QALA), 297–319 (LLVF…TAAI), 331–353 (VLGY…GGII), and 357–379 (FTIS…MLWI).

This sequence belongs to the major facilitator superfamily.

Its subcellular location is the cell membrane. This is an uncharacterized protein from Bacillus subtilis (strain 168).